Reading from the N-terminus, the 322-residue chain is Fructose-1,6-bisphosphatase class 1 (322 aa).

4 residues coordinate Mg(2+): Glu-84, Asp-103, Leu-105, and Asp-106. Substrate is bound by residues 106 to 109 (DGSS), Asn-198, and Lys-264. A Mg(2+)-binding site is contributed by Glu-270.

Belongs to the FBPase class 1 family. As to quaternary structure, homotetramer. Mg(2+) is required as a cofactor.

Its subcellular location is the cytoplasm. It carries out the reaction beta-D-fructose 1,6-bisphosphate + H2O = beta-D-fructose 6-phosphate + phosphate. Its pathway is carbohydrate biosynthesis; gluconeogenesis. The sequence is that of Fructose-1,6-bisphosphatase class 1 from Saccharophagus degradans (strain 2-40 / ATCC 43961 / DSM 17024).